Consider the following 857-residue polypeptide: MSENSQSSPFFGTESTLHPSLPLLSNSIQPAGTVCNFSRVSTPDVSSAWLLPSASSTSLQPLMGNAYLNPHAGTTMLTVLTEQGQISTSTPSYPGALKWDCTGSTHGREDALQEFNMKLIDQDTTLSSLAVTNQSDKILDPNVIVPFHPTLSSSFVQITPSQMPNQGYSLAPSYQEGSQVYYYEHNNLGPLIAGEFGQCLKAHGSVSYPGSQTSVLQPEMVMVLKEIQPRNIQMPLFTSAFSYSTSAQSMPDNGLPVVQMETSLGLPPSGQTHCQLQSPELCNTCVQVSQIRPPAVNGDKALTAPIHSPSEFLALPPAPSLEQPENKTMPEIKEGTKENQDRPVLTLEHPDLQQPLHCTDTESLRQKPDSDNAHLGCICMGPKELVGLENENGSSFNFKDITRLEADIQLPQLLNTLTDIDQDQSCETWTVTSGPSDQVRKNKHKSFELLEGAPQAKFQHWDLVEGEGAGGVAGASERAIDNMAKQPEGKAPKGPPSKNRKARKQEQERPSGPQNKSKKTEELKQSRNTAKAEENLSIPKTKRKRNPPELSQNSFKKPRTNLAMHMLESVQVFHPLGKKTEKKTGISSFRGLRTFTINKDPGPGSGTVTTTVLNMPCEGQFPPKSPGKVQRAESSIDKDCLSPSQYELPPAGKVKLVPLPFPTLDKPQSRPASRKPLSLALRRTTTVQPHSHSAQPTTLRPAQPPPVSSSLIASAKPAPPISSSSTGPNVTNPNQSSAVPHLVTSRPVPYRASSHTSFQRELVSAARNKVPSPPKPQTKYLLHDFSRQPIPWKKVDILGPVVSQPITKEQRPEREAMKRQAQQERENAVKNPSTGKLQIFLQRERDMEISQYYGYAM.

Disordered regions lie at residues 316–339 (PPAP…TKEN), 484–561 (AKQP…PRTN), 619–777 (GQFP…PKPQ), and 809–836 (EQRP…STGK). 3 stretches are compositionally biased toward basic and acidic residues: residues 324–339 (PENK…TKEN), 518–534 (KKTE…KAEE), and 630–640 (QRAESSIDKDC). Positions 683–700 (RTTTVQPHSHSAQPTTLR) are enriched in polar residues. Residues 708 to 725 (SSSLIASAKPAPPISSSS) are compositionally biased toward low complexity. Residues 726 to 738 (TGPNVTNPNQSSA) show a composition bias toward polar residues. Residues 809–828 (EQRPEREAMKRQAQQERENA) show a composition bias toward basic and acidic residues.

This is an uncharacterized protein from Mus musculus (Mouse).